Here is a 171-residue protein sequence, read N- to C-terminus: Transcription antitermination protein NusB (171 aa).

The protein belongs to the NusB family.

Involved in transcription antitermination. Required for transcription of ribosomal RNA (rRNA) genes. Binds specifically to the boxA antiterminator sequence of the ribosomal RNA (rrn) operons. The chain is Transcription antitermination protein NusB from Brucella melitensis biotype 1 (strain ATCC 23456 / CCUG 17765 / NCTC 10094 / 16M).